Here is a 551-residue protein sequence, read N- to C-terminus: Calcium-dependent protein kinase 13 (551 aa).

The N-myristoyl glycine moiety is linked to residue Gly2. The interval Ser15–Gly78 is disordered. In terms of domain architecture, Protein kinase spans Tyr88 to Ile346. Residues Leu94–Thr102 and Lys117 contribute to the ATP site. The active-site Proton acceptor is the Asp212. Residues Ala352–Ile382 are autoinhibitory domain. EF-hand domains follow at residues Glu389–Thr424, Leu425–Leu460, Glu461–Pro496, and Asp497–Gly530. The Ca(2+) site is built by Asp402, Asp404, Ser406, Glu413, Asp438, Asp440, Ser442, Thr444, Glu449, Asp474, Asp476, Ser478, Tyr480, Glu485, Asp508, Asp510, Asp512, Arg514, and Glu519.

It belongs to the protein kinase superfamily. Ser/Thr protein kinase family. CDPK subfamily. As to expression, expressed in vascular tissues of crowns and roots, vascular bundles and central cylinder. Expressed in roots, leaf blades, spikelets and developing seeds.

It localises to the membrane. The catalysed reaction is L-seryl-[protein] + ATP = O-phospho-L-seryl-[protein] + ADP + H(+). It carries out the reaction L-threonyl-[protein] + ATP = O-phospho-L-threonyl-[protein] + ADP + H(+). Activated by calcium. Autophosphorylation may play an important role in the regulation of the kinase activity. Its function is as follows. May play a role in signal transduction pathways that involve calcium as a second messenger. May function in signal transduction pathways that positively regulate responses to cold, salt and drought stresses. The sequence is that of Calcium-dependent protein kinase 13 from Oryza sativa subsp. japonica (Rice).